The following is a 350-amino-acid chain: Galactokinase (350 aa).

14–17 (EHTD) is a binding site for substrate. ATP-binding positions include Ser46 and 96 to 102 (GAGLSSS). Ser102 and Glu134 together coordinate Mg(2+). Catalysis depends on Asp146, which acts as the Proton acceptor. Residue Tyr196 participates in substrate binding.

This sequence belongs to the GHMP kinase family. GalK subfamily.

The protein localises to the cytoplasm. It catalyses the reaction alpha-D-galactose + ATP = alpha-D-galactose 1-phosphate + ADP + H(+). Its pathway is carbohydrate metabolism; galactose metabolism. In terms of biological role, catalyzes the transfer of the gamma-phosphate of ATP to D-galactose to form alpha-D-galactose-1-phosphate (Gal-1-P). In Thermotoga neapolitana, this protein is Galactokinase.